The primary structure comprises 1374 residues: Tonsoku-like protein (1374 aa).

8 TPR repeats span residues 27 to 60 (ASVC…LETT), 67 to 100 (AVAH…ACAL), 107 to 140 (QRAW…FEKS), 162 to 195 (TRIY…AEQN), 202 to 235 (FRAR…ARVL), 242 to 275 (SECC…GSQK), 311 to 344 (MGIC…AELL), and 352 to 385 (AVIH…QEGN). Residues 460–508 (KAAGDEDEGDGEDEEDEEDDDALEATELELSESENEADASPPLEEDEEL) are disordered. The span at 464–507 (DEDEGDGEDEEDEEDDDALEATELELSESENEADASPPLEEDEE) shows a compositional bias: acidic residues. 3 ANK repeats span residues 526-558 (VGET…PRDY), 559-591 (CGWT…DPGG), and 595-627 (DGIT…LRTR). Residues 668–777 (GRAPHSSQAP…ASDREAATTS (110 aa)) are disordered. Positions 672 to 682 (HSSQAPQTLPS) are enriched in polar residues. The span at 690–699 (TSPPSSPCPG) shows a compositional bias: pro residues. At Ser-711 the chain carries Phosphoserine. The span at 731–744 (SSSSSEGEDSAGPS) shows a compositional bias: low complexity. Arg-788 bears the Omega-N-methylarginine mark. A disordered region spans residues 829–908 (EEDFPMSPGH…PARSPDVPRV (80 aa)). 7 LRR repeats span residues 1065–1089 (HSAL…LLAT), 1093–1121 (VPGL…LLGQ), 1124–1147 (LQNL…ALAS), 1184–1207 (TKCL…PVLG), 1243–1266 (GCVL…ALSR), 1271–1296 (CPSL…LLST), and 1327–1350 (VAQL…ALHQ).

Belongs to the Tonsoku family. Component of the MMS22L-TONSL complex, a complex at least composed of MMS22L and TONSL/NFKBIL2. Interacts with the MCM complex, the FACT complex and the RPA complex. Interacts with MCM5; the interaction is direct. Binds histones, with a strong preference for histone H3.1 (histones H3.1 and H3-4/H3.1t). Interacts (via ANK repeats) with histone H4; specifically binds histone H4 lacking methylation at 'Lys-20' (H4K20me0). May interact with DNAJC9; the interaction seems to be histone-dependent.

It localises to the nucleus. The protein localises to the chromosome. It is found in the cytoplasm. Functionally, component of the MMS22L-TONSL complex, a complex that promotes homologous recombination-mediated repair of double-strand breaks (DSBs) at stalled or collapsed replication forks. The MMS22L-TONSL complex is required to maintain genome integrity during DNA replication. It mediates the assembly of RAD51 filaments on single-stranded DNA (ssDNA): the MMS22L-TONSL complex is recruited to DSBs following histone replacement by histone chaperones and eviction of the replication protein A complex (RPA/RP-A) from DSBs. Following recruitment to DSBs, the TONSL-MMS22L complex promotes recruitment of RAD51 filaments and subsequent homologous recombination. Within the complex, TONSL acts as a histone reader, which recognizes and binds newly synthesized histones following their replacement by histone chaperones. Specifically binds histone H4 lacking methylation at 'Lys-20' (H4K20me0) and histone H3.1. The sequence is that of Tonsoku-like protein (TONSL) from Bos taurus (Bovine).